The sequence spans 568 residues: Sulfite reductase [NADPH] hemoprotein beta-component (568 aa).

[4Fe-4S] cluster is bound by residues C425, C431, C470, and C474. C474 lines the siroheme pocket.

Belongs to the nitrite and sulfite reductase 4Fe-4S domain family. In terms of assembly, alpha(8)-beta(8). The alpha component is a flavoprotein, the beta component is a hemoprotein. Siroheme is required as a cofactor. The cofactor is [4Fe-4S] cluster.

The catalysed reaction is hydrogen sulfide + 3 NADP(+) + 3 H2O = sulfite + 3 NADPH + 4 H(+). Its pathway is sulfur metabolism; hydrogen sulfide biosynthesis; hydrogen sulfide from sulfite (NADPH route): step 1/1. Component of the sulfite reductase complex that catalyzes the 6-electron reduction of sulfite to sulfide. This is one of several activities required for the biosynthesis of L-cysteine from sulfate. This chain is Sulfite reductase [NADPH] hemoprotein beta-component, found in Xanthomonas euvesicatoria pv. vesicatoria (strain 85-10) (Xanthomonas campestris pv. vesicatoria).